We begin with the raw amino-acid sequence, 194 residues long: FMN-dependent NADH:quinone oxidoreductase (194 aa).

Residues serine 9, 15-17 (SIS), and 85-88 (MYNF) contribute to the FMN site.

Belongs to the azoreductase type 1 family. As to quaternary structure, homodimer. Requires FMN as cofactor.

It catalyses the reaction 2 a quinone + NADH + H(+) = 2 a 1,4-benzosemiquinone + NAD(+). The catalysed reaction is N,N-dimethyl-1,4-phenylenediamine + anthranilate + 2 NAD(+) = 2-(4-dimethylaminophenyl)diazenylbenzoate + 2 NADH + 2 H(+). Its function is as follows. Quinone reductase that provides resistance to thiol-specific stress caused by electrophilic quinones. In terms of biological role, also exhibits azoreductase activity. Catalyzes the reductive cleavage of the azo bond in aromatic azo compounds to the corresponding amines. This chain is FMN-dependent NADH:quinone oxidoreductase, found in Xanthomonas oryzae pv. oryzae (strain MAFF 311018).